The sequence spans 510 residues: uncharacterized protein (510 aa).

This sequence to B.subtilis SpoVR.

This is an uncharacterized protein from Escherichia coli (strain K12).